The sequence spans 329 residues: Malate dehydrogenase (329 aa).

13–19 (GAAGNIS) contributes to the NAD(+) binding site. Substrate contacts are provided by Arg-94 and Arg-100. NAD(+)-binding positions include Asn-107, Gln-114, and 131–133 (VGN). Substrate contacts are provided by Asn-133 and Arg-164. His-189 acts as the Proton acceptor in catalysis.

This sequence belongs to the LDH/MDH superfamily. MDH type 2 family.

The catalysed reaction is (S)-malate + NAD(+) = oxaloacetate + NADH + H(+). Functionally, catalyzes the reversible oxidation of malate to oxaloacetate. In Psychrobacter cryohalolentis (strain ATCC BAA-1226 / DSM 17306 / VKM B-2378 / K5), this protein is Malate dehydrogenase.